An 878-amino-acid chain; its full sequence is Alanine--tRNA ligase (878 aa).

Residues His571, His575, Cys673, and His677 each contribute to the Zn(2+) site.

It belongs to the class-II aminoacyl-tRNA synthetase family. Zn(2+) is required as a cofactor.

Its subcellular location is the cytoplasm. It catalyses the reaction tRNA(Ala) + L-alanine + ATP = L-alanyl-tRNA(Ala) + AMP + diphosphate. In terms of biological role, catalyzes the attachment of alanine to tRNA(Ala) in a two-step reaction: alanine is first activated by ATP to form Ala-AMP and then transferred to the acceptor end of tRNA(Ala). Also edits incorrectly charged Ser-tRNA(Ala) and Gly-tRNA(Ala) via its editing domain. This Syntrophus aciditrophicus (strain SB) protein is Alanine--tRNA ligase.